We begin with the raw amino-acid sequence, 471 residues long: Tryptophanase (471 aa).

N6-acetyllysine occurs at positions 5, 115, and 156. Lys270 is subject to N6-(pyridoxal phosphate)lysine. Residue Lys450 is modified to N6-acetyllysine.

It belongs to the beta-eliminating lyase family. In terms of assembly, homotetramer. Requires pyridoxal 5'-phosphate as cofactor.

The enzyme catalyses L-tryptophan + H2O = indole + pyruvate + NH4(+). It functions in the pathway amino-acid degradation; L-tryptophan degradation via pyruvate pathway; indole and pyruvate from L-tryptophan: step 1/1. This is Tryptophanase from Escherichia coli O139:H28 (strain E24377A / ETEC).